The sequence spans 252 residues: Large ribosomal subunit protein uL29m (252 aa).

The residue at position 146 (K146) is an N6-acetyllysine. The segment covering 230-240 (KKKEKILHAKF) has biased composition (basic residues). Residues 230 to 252 (KKKEKILHAKFPHLSQERKSSSV) form a disordered region.

It belongs to the universal ribosomal protein uL29 family. Component of the mitochondrial ribosome large subunit (39S) which comprises a 16S rRNA and about 50 distinct proteins.

The protein resides in the mitochondrion. The chain is Large ribosomal subunit protein uL29m (Mrpl47) from Mus musculus (Mouse).